Reading from the N-terminus, the 383-residue chain is Succinyl-diaminopimelate desuccinylase (383 aa).

Position 68 (His68) interacts with Zn(2+). The active site involves Asp70. Asp100 contacts Zn(2+). Glu130 functions as the Proton acceptor in the catalytic mechanism. Positions 131, 159, and 352 each coordinate Zn(2+).

Belongs to the peptidase M20A family. DapE subfamily. Homodimer. Requires Zn(2+) as cofactor. Co(2+) is required as a cofactor.

It catalyses the reaction N-succinyl-(2S,6S)-2,6-diaminopimelate + H2O = (2S,6S)-2,6-diaminopimelate + succinate. It participates in amino-acid biosynthesis; L-lysine biosynthesis via DAP pathway; LL-2,6-diaminopimelate from (S)-tetrahydrodipicolinate (succinylase route): step 3/3. In terms of biological role, catalyzes the hydrolysis of N-succinyl-L,L-diaminopimelic acid (SDAP), forming succinate and LL-2,6-diaminopimelate (DAP), an intermediate involved in the bacterial biosynthesis of lysine and meso-diaminopimelic acid, an essential component of bacterial cell walls. This chain is Succinyl-diaminopimelate desuccinylase, found in Granulibacter bethesdensis (strain ATCC BAA-1260 / CGDNIH1).